The sequence spans 471 residues: 6-phosphofructo-2-kinase/fructose-2,6-bisphosphatase 1 (471 aa).

Ser-2 is subject to N-acetylserine. Residues 2–250 (SQEMGELTQT…VYYLMNIHVT (249 aa)) form a 6-phosphofructo-2-kinase region. Phosphoserine; by PKA is present on Ser-33. 49-57 (GLPARGKTY) lines the ATP pocket. Beta-D-fructose 6-phosphate is bound by residues Arg-82 and Arg-105. Asp-131 is an active-site residue. The beta-D-fructose 6-phosphate site is built by Thr-133 and Arg-139. Position 141 is a phosphoserine (Ser-141). Cys-161 is a catalytic residue. ATP is bound at residue 170-175 (NIRQVK). Residues Lys-175, Arg-196, and Tyr-200 each contribute to the beta-D-fructose 6-phosphate site. A fructose-2,6-bisphosphatase region spans residues 251-471 (PRSIYLCRHG…EALDTVPAHY (221 aa)). A beta-D-fructose 2,6-bisphosphate-binding site is contributed by Arg-258. His-259 functions as the Tele-phosphohistidine intermediate in the catalytic mechanism. Asn-265, Gly-271, and Arg-308 together coordinate beta-D-fructose 2,6-bisphosphate. The Proton donor/acceptor role is filled by Glu-328. 6 residues coordinate beta-D-fructose 2,6-bisphosphate: Tyr-339, Arg-353, Lys-357, Tyr-368, Gln-394, and Arg-398. 350–353 (FALR) contributes to the ATP binding site. ATP contacts are provided by residues 394–398 (QAVMR) and Tyr-430.

In the C-terminal section; belongs to the phosphoglycerate mutase family. In terms of assembly, homodimer. As to expression, liver.

The catalysed reaction is beta-D-fructose 2,6-bisphosphate + H2O = beta-D-fructose 6-phosphate + phosphate. It catalyses the reaction beta-D-fructose 6-phosphate + ATP = beta-D-fructose 2,6-bisphosphate + ADP + H(+). Its activity is regulated as follows. Phosphorylation at Ser-33 inhibits the kinase and activates the bisphosphatase. Functionally, synthesis and degradation of fructose 2,6-bisphosphate. This is 6-phosphofructo-2-kinase/fructose-2,6-bisphosphatase 1 from Bos taurus (Bovine).